A 381-amino-acid chain; its full sequence is Heme A synthase (381 aa).

Residues 1–23 form a disordered region; sequence MARRPVFQEVTETTPPGTTPSGG. Positions 11 to 23 are enriched in low complexity; it reads TETTPPGTTPSGG. The next 8 helical transmembrane spans lie at 34 to 54, 120 to 140, 151 to 171, 185 to 205, 228 to 248, 285 to 305, 319 to 339, and 342 to 362; these read GAIR…IALG, RLLG…FLAT, LLLL…MVHS, LATH…YVLA, TTGL…VAGI, LVQF…VVVF, AYVA…MNVL, and SPLP…TLIL. Histidine 290 is a binding site for heme. Histidine 350 is a binding site for heme.

Belongs to the COX15/CtaA family. Type 2 subfamily. As to quaternary structure, interacts with CtaB. Heme b is required as a cofactor.

It localises to the cell membrane. The enzyme catalyses Fe(II)-heme o + 2 A + H2O = Fe(II)-heme a + 2 AH2. It participates in porphyrin-containing compound metabolism; heme A biosynthesis; heme A from heme O: step 1/1. In terms of biological role, catalyzes the conversion of heme O to heme A by two successive hydroxylations of the methyl group at C8. The first hydroxylation forms heme I, the second hydroxylation results in an unstable dihydroxymethyl group, which spontaneously dehydrates, resulting in the formyl group of heme A. The polypeptide is Heme A synthase (Paracoccus denitrificans (strain Pd 1222)).